A 149-amino-acid polypeptide reads, in one-letter code: NADH-quinone oxidoreductase subunit I 1 (149 aa).

4Fe-4S ferredoxin-type domains lie at 51–82 and 93–122; these read LKSF…VQGT and THYV…YSTE. The [4Fe-4S] cluster site is built by Cys-62, Cys-65, Cys-68, Cys-72, Cys-102, Cys-105, Cys-108, and Cys-112.

The protein belongs to the complex I 23 kDa subunit family. As to quaternary structure, NDH-1 is composed of 14 different subunits. Subunits NuoA, H, J, K, L, M, N constitute the membrane sector of the complex. [4Fe-4S] cluster is required as a cofactor.

It is found in the cell inner membrane. It catalyses the reaction a quinone + NADH + 5 H(+)(in) = a quinol + NAD(+) + 4 H(+)(out). NDH-1 shuttles electrons from NADH, via FMN and iron-sulfur (Fe-S) centers, to quinones in the respiratory chain. The immediate electron acceptor for the enzyme in this species is believed to be ubiquinone. Couples the redox reaction to proton translocation (for every two electrons transferred, four hydrogen ions are translocated across the cytoplasmic membrane), and thus conserves the redox energy in a proton gradient. The sequence is that of NADH-quinone oxidoreductase subunit I 1 from Syntrophobacter fumaroxidans (strain DSM 10017 / MPOB).